Here is a 336-residue protein sequence, read N- to C-terminus: Dihydroorotate dehydrogenase (quinone) (336 aa).

Residues 62-66 (AGLDK) and Thr-86 each bind FMN. Lys-66 contributes to the substrate binding site. Substrate is bound at residue 111 to 115 (NRMGF). FMN is bound by residues Asn-139 and Asn-172. Asn-172 is a binding site for substrate. Ser-175 acts as the Nucleophile in catalysis. Asn-177 is a substrate binding site. FMN contacts are provided by Lys-217 and Thr-245. Substrate is bound at residue 246–247 (NT). FMN is bound by residues Gly-268, Gly-297, and 318-319 (YS).

Belongs to the dihydroorotate dehydrogenase family. Type 2 subfamily. In terms of assembly, monomer. Requires FMN as cofactor.

The protein resides in the cell membrane. It catalyses the reaction (S)-dihydroorotate + a quinone = orotate + a quinol. It functions in the pathway pyrimidine metabolism; UMP biosynthesis via de novo pathway; orotate from (S)-dihydroorotate (quinone route): step 1/1. Its function is as follows. Catalyzes the conversion of dihydroorotate to orotate with quinone as electron acceptor. In Salmonella choleraesuis (strain SC-B67), this protein is Dihydroorotate dehydrogenase (quinone).